The chain runs to 500 residues: ATP synthase subunit alpha (500 aa).

169–176 (GDRQTGKT) contacts ATP.

It belongs to the ATPase alpha/beta chains family. F-type ATPases have 2 components, CF(1) - the catalytic core - and CF(0) - the membrane proton channel. CF(1) has five subunits: alpha(3), beta(3), gamma(1), delta(1), epsilon(1). CF(0) has three main subunits: a(1), b(2) and c(9-12). The alpha and beta chains form an alternating ring which encloses part of the gamma chain. CF(1) is attached to CF(0) by a central stalk formed by the gamma and epsilon chains, while a peripheral stalk is formed by the delta and b chains.

It localises to the cell membrane. It carries out the reaction ATP + H2O + 4 H(+)(in) = ADP + phosphate + 5 H(+)(out). In terms of biological role, produces ATP from ADP in the presence of a proton gradient across the membrane. The alpha chain is a regulatory subunit. This is ATP synthase subunit alpha from Lactococcus lactis subsp. lactis (strain IL1403) (Streptococcus lactis).